We begin with the raw amino-acid sequence, 647 residues long: uncharacterized protein (647 aa).

This is an uncharacterized protein from Cryphonectria parasitica mycoreovirus 1 (strain 9B21) (CpMYRV-1).